The primary structure comprises 295 residues: Acetylglutamate kinase (295 aa).

Residues 70–71, R92, and N191 contribute to the substrate site; that span reads GG.

The protein belongs to the acetylglutamate kinase family. ArgB subfamily.

It localises to the cytoplasm. It carries out the reaction N-acetyl-L-glutamate + ATP = N-acetyl-L-glutamyl 5-phosphate + ADP. The protein operates within amino-acid biosynthesis; L-arginine biosynthesis; N(2)-acetyl-L-ornithine from L-glutamate: step 2/4. Functionally, catalyzes the ATP-dependent phosphorylation of N-acetyl-L-glutamate. This is Acetylglutamate kinase from Mycolicibacterium paratuberculosis (strain ATCC BAA-968 / K-10) (Mycobacterium paratuberculosis).